Here is a 305-residue protein sequence, read N- to C-terminus: MAYTPGSRGGRGGSRGGRGGFNGGRGGFGGGRGGARGGGRGGARGGRGGRGGARGGRGGSSGGRGGAKGGAKVIIEPHRHAGVFIARGKEDLLVTRNLVPGESVYNEKRISVDSPDGTKVEYRVWNPFRSKLAAGILGGLDNIYIKPGARVLYLGAANGTSVSHVADVVGPEGLVYAVEFSHRSGRDLLNMAKKRTNVIPIVEDARHVQKYRMLVGMVDVVFADVAQPDQARIVALNAAAFLKNEGGVVISVKASCIDSTADAAVVFAREVKKMQEEKIKPQEQLTLEPYERDHCIIVGKYLRHQ.

The segment at 1-70 is disordered; the sequence is MAYTPGSRGG…SGGRGGAKGG (70 aa). Gly residues predominate over residues 7–69; it reads SRGGRGGSRG…SSGGRGGAKG (63 aa). Ser111 and Ser114 each carry phosphoserine. S-adenosyl-L-methionine is bound by residues 160 to 161, 179 to 180, 204 to 205, and 224 to 227; these read TS, EF, DA, and DVAQ.

The protein belongs to the methyltransferase superfamily. Fibrillarin family. In terms of assembly, component of box C/D small nucleolar ribonucleoprotein (snoRNP) particles. Post-translationally, by homology to other fibrillarins, some or all of the N-terminal domain arginines are modified to asymmetric dimethylarginine (DMA).

The protein localises to the nucleus. It is found in the nucleolus. It carries out the reaction L-glutaminyl-[histone H2A] + S-adenosyl-L-methionine = N(5)-methyl-L-glutaminyl-[histone H2A] + S-adenosyl-L-homocysteine + H(+). S-adenosyl-L-methionine-dependent methyltransferase that has the ability to methylate both RNAs and proteins. Involved in pre-rRNA processing by catalyzing the site-specific 2'-hydroxyl methylation of ribose moieties in pre-ribosomal RNA. Site specificity is provided by a guide RNA that base pairs with the substrate. Methylation occurs at a characteristic distance from the sequence involved in base pairing with the guide RNA. Also acts as a protein methyltransferase by mediating methylation of 'Gln-105' of histone H2A (H2AQ105me), a modification that impairs binding of the FACT complex and is specifically present at 35S ribosomal DNA locus. The polypeptide is rRNA 2'-O-methyltransferase fibrillarin (fib1) (Schizosaccharomyces pombe (strain 972 / ATCC 24843) (Fission yeast)).